The sequence spans 391 residues: GTPase Obg (391 aa).

In terms of domain architecture, Obg spans 1-159; sequence MKFIDEALIR…RDLLLELMLL (159 aa). One can recognise an OBG-type G domain in the interval 160 to 333; sequence ADVGMLGLPN…LTRDIMDFIE (174 aa). GTP-binding positions include 166–173, 191–195, 213–216, 283–286, and 314–316; these read GLPNAGKS, FTTLV, DIPG, NKID, and SAA. Mg(2+)-binding residues include S173 and T193.

It belongs to the TRAFAC class OBG-HflX-like GTPase superfamily. OBG GTPase family. Monomer. It depends on Mg(2+) as a cofactor.

The protein localises to the cytoplasm. An essential GTPase which binds GTP, GDP and possibly (p)ppGpp with moderate affinity, with high nucleotide exchange rates and a fairly low GTP hydrolysis rate. Plays a role in control of the cell cycle, stress response, ribosome biogenesis and in those bacteria that undergo differentiation, in morphogenesis control. The polypeptide is GTPase Obg (Actinobacillus pleuropneumoniae serotype 7 (strain AP76)).